We begin with the raw amino-acid sequence, 429 residues long: 3-phosphoshikimate 1-carboxyvinyltransferase (429 aa).

Residues Lys21, Ser22, and Arg26 each contribute to the 3-phosphoshikimate site. Lys21 contributes to the phosphoenolpyruvate binding site. Positions 94 and 122 each coordinate phosphoenolpyruvate. 3-phosphoshikimate is bound by residues Ser167, Gln169, Asp315, and Lys342. Phosphoenolpyruvate is bound at residue Gln169. Catalysis depends on Asp315, which acts as the Proton acceptor. The phosphoenolpyruvate site is built by Arg346 and Arg388.

It belongs to the EPSP synthase family. In terms of assembly, monomer.

The protein localises to the cytoplasm. It catalyses the reaction 3-phosphoshikimate + phosphoenolpyruvate = 5-O-(1-carboxyvinyl)-3-phosphoshikimate + phosphate. The protein operates within metabolic intermediate biosynthesis; chorismate biosynthesis; chorismate from D-erythrose 4-phosphate and phosphoenolpyruvate: step 6/7. Functionally, catalyzes the transfer of the enolpyruvyl moiety of phosphoenolpyruvate (PEP) to the 5-hydroxyl of shikimate-3-phosphate (S3P) to produce enolpyruvyl shikimate-3-phosphate and inorganic phosphate. The chain is 3-phosphoshikimate 1-carboxyvinyltransferase from Desulforamulus reducens (strain ATCC BAA-1160 / DSM 100696 / MI-1) (Desulfotomaculum reducens).